We begin with the raw amino-acid sequence, 123 residues long: Small ribosomal subunit protein uS12 (123 aa).

At aspartate 89 the chain carries 3-methylthioaspartic acid.

This sequence belongs to the universal ribosomal protein uS12 family. As to quaternary structure, part of the 30S ribosomal subunit. Contacts proteins S8 and S17. May interact with IF1 in the 30S initiation complex.

In terms of biological role, with S4 and S5 plays an important role in translational accuracy. Interacts with and stabilizes bases of the 16S rRNA that are involved in tRNA selection in the A site and with the mRNA backbone. Located at the interface of the 30S and 50S subunits, it traverses the body of the 30S subunit contacting proteins on the other side and probably holding the rRNA structure together. The combined cluster of proteins S8, S12 and S17 appears to hold together the shoulder and platform of the 30S subunit. The polypeptide is Small ribosomal subunit protein uS12 (Rhizobium meliloti (strain 1021) (Ensifer meliloti)).